A 295-amino-acid chain; its full sequence is Zinc finger C2H2 protein ECU08_0560 (295 aa).

2 C2H2-type zinc fingers span residues 219–243 and 249–273; these read FVCT…NLMH and HKCR…YKVH.

In Encephalitozoon cuniculi (strain GB-M1) (Microsporidian parasite), this protein is Zinc finger C2H2 protein ECU08_0560.